The primary structure comprises 533 residues: Ribonuclease Y (533 aa).

Residues 16 to 41 (VERIRRRAEQDAAEQTERVRREAEQI) are disordered. Positions 22-41 (RAEQDAAEQTERVRREAEQI) are enriched in basic and acidic residues. A KH domain is found at 223–289 (VVSVLHLPSD…RITLTALVSD (67 aa)). Residues 349 to 442 (VLAHLVESAH…TQAADQISGG (94 aa)) enclose the HD domain.

It belongs to the RNase Y family.

Its function is as follows. Endoribonuclease that initiates mRNA decay. This Parafrankia sp. (strain EAN1pec) protein is Ribonuclease Y.